The sequence spans 641 residues: Glycerol metabolism operon regulatory protein (641 aa).

Residues 1–318 are sensor domain; sequence MTTHTQDIGK…MRQLMTSQLG (318 aa). Residues 52–189 form the GAF domain; it reads ALLTIAQAAL…AIAREVGNSL (138 aa). Positions 203-265 constitute a PAS domain; it reads NQMYGLLESM…MLLRRAIKHA (63 aa). The Sigma-54 factor interaction domain occupies 327–552; it reads MSTDDPETRR…LNSIIENIAI (226 aa). Residues 355 to 362 and 415 to 424 contribute to the ATP site; these read GEEGVGKE and ANGGTLFLEK.

Functionally, transcriptional activator of the glycerol utilization dha operon. This chain is Glycerol metabolism operon regulatory protein, found in Citrobacter freundii.